The primary structure comprises 92 residues: Small ribosomal subunit protein uS19 (92 aa).

Belongs to the universal ribosomal protein uS19 family.

Its function is as follows. Protein S19 forms a complex with S13 that binds strongly to the 16S ribosomal RNA. The sequence is that of Small ribosomal subunit protein uS19 from Aliivibrio salmonicida (strain LFI1238) (Vibrio salmonicida (strain LFI1238)).